The following is a 113-amino-acid chain: MEDYQAAEETAFVVDEVSNIVKEAIESAIGGNAYQHSKVNQWTTNVVEQTLSQLTKLGKPFKYIVTCVIMQKNGAGLHTASSCFWDSSTDGSCTVRWENKTMYCIVSAFGLSI.

Met-1 is subject to N-acetylmethionine. The interaction with GNB1 stretch occupies residues 41–113 (QWTTNVVEQT…CIVSAFGLSI (73 aa)).

This sequence belongs to the dynein light chain Tctex-type family. As to quaternary structure, homodimer. The cytoplasmic dynein 1 complex consists of two catalytic heavy chains (HCs) and a number of non-catalytic subunits presented by intermediate chains (ICs), light intermediate chains (LICs) and light chains (LCs); the composition seems to vary in respect to the IC, LIC and LC composition. The heavy chain homodimer serves as a scaffold for the probable homodimeric assembly of the non-catalytic subunits. The ICs and LICs bind directly to the HC dimer and the LCs assemble on the IC dimer. DYNLT1 and DYNLT3 compete for association with dynein IC (DYNC1I1 or DYNC1I2). Self-associates. Interacts with RHO. Interacts with DYNC1I1 and DYNC1I2. Interacts with DOC2A, DOC2B and SCN10A. Interacts with PVR. Interacts with SVIL isoform 2. Interacts with GNB1; the interaction occurs in presence of guanine nucleotide-binding protein G(T) subunit gamma; the interaction diminishes the association of DYNLT1 with dynein IC (DYNC1I1 or DYNC1I2). Interacts with GNB2, GNB3 and GNB5; the interactions occur in presence of guanine nucleotide-binding protein G(T) subunit gamma. Interacts with ACVR2B and ARHGEF2. Interacts with DNAI4. Interacts with CFAP61. Phosphorylated by BMPR2. The phosphorylation status is proposed to regulate the association with the cytoplasmic dynein complex and may have role in cytoplasmic dynein cargo release.

It localises to the golgi apparatus. Its subcellular location is the cytoplasm. The protein localises to the cytoskeleton. The protein resides in the spindle. In terms of biological role, acts as one of several non-catalytic accessory components of the cytoplasmic dynein 1 complex that are thought to be involved in linking dynein to cargos and to adapter proteins that regulate dynein function. Cytoplasmic dynein 1 acts as a motor for the intracellular retrograde motility of vesicles and organelles along microtubules. Binds to transport cargos and is involved in apical cargo transport such as rhodopsin-bearing vesicles in polarized epithelia. May also be a accessory component of axonemal dynein. Its function is as follows. Plays a role in neuronal morphogenesis; the function is independent of cytoplasmic dynein and seems to be coupled to regulation of the actin cytoskeleton by enhancing Rac1 activity. The function in neurogenesis may be regulated by association with a G-protein beta-gamma dimer. May function as a receptor-independent activator of heterotrimeric G-protein signaling; the activation appears to be independent of a nucleotide exchange. Plays a role in regulating neurogenesis; inhibits the genesis of neurons from precursor cells during cortical development presumably by antagonizing ARHGEF2. Involved in the regulation of mitotic spindle orientation. Unrelated to the role in retrograde microtubule-associated movement may play a role in the dimerization of cytoplasmic proteins/domains such as for ACVR2B. Binds to the cytoplasmic domain of ACVR2B and, in vitro, inhibits ACVR2B signaling. This chain is Dynein light chain Tctex-type 1 (DYNLT1), found in Bos taurus (Bovine).